Consider the following 279-residue polypeptide: MVNIGTHVSSSKSLDLVFERGKEVEASSIQFFIRSPRSWAWIERTDEEKERFLQKKNEYKIHPLVVHASYLFNLASFEEELYKKSIESVIQELKLCEELKIDYYVIHAGKSKGNPKKQAIDRILRAFEEIFSRLNLKNTTFLVETLAGQSGEVGATLEEVYTLIEPFENEKIGVCLDTCHIFASGYQINTDEGFNSFKKELIDYNLLEKTKVIHCNDSKAPFNSKKDRHEHIGKGFIGLEGFRIFLNDDDFNKLPFILETPKEGDMDRVNINLLKSLIK.

Histidine 67, histidine 107, glutamate 144, aspartate 177, histidine 180, histidine 214, aspartate 227, histidine 229, and glutamate 259 together coordinate Zn(2+).

Belongs to the AP endonuclease 2 family. Zn(2+) serves as cofactor.

It carries out the reaction Endonucleolytic cleavage to 5'-phosphooligonucleotide end-products.. Endonuclease IV plays a role in DNA repair. It cleaves phosphodiester bonds at apurinic or apyrimidinic (AP) sites, generating a 3'-hydroxyl group and a 5'-terminal sugar phosphate. The protein is Probable endonuclease 4 of Sulfurihydrogenibium sp. (strain YO3AOP1).